Consider the following 633-residue polypeptide: Extracellular metalloproteinase 3 (633 aa).

Positions 1-18 (MHGLLLAGLLALPMNVLA) are cleaved as a signal peptide. Positions 19–246 (YPAEQHASNV…VHNVVDYVAS (228 aa)) are excised as a propeptide. Asparagine 410 carries N-linked (GlcNAc...) asparagine glycosylation. A Zn(2+)-binding site is contributed by histidine 429. The active site involves glutamate 430. Histidine 433 contributes to the Zn(2+) binding site. Residues asparagine 480 and asparagine 622 are each glycosylated (N-linked (GlcNAc...) asparagine).

The protein belongs to the peptidase M36 family. Zn(2+) serves as cofactor.

The protein localises to the secreted. Its function is as follows. Secreted metalloproteinase probably acting as a virulence factor. This chain is Extracellular metalloproteinase 3 (MEP3), found in Trichophyton rubrum (Athlete's foot fungus).